We begin with the raw amino-acid sequence, 55 residues long: Rubredoxin-2 (55 aa).

The region spanning 1–54 (MRKWQCVVCGFIYDEALGLPEEGIPAGTRWEDIPADWVCPDCGVGKIDFEMIEI) is the Rubredoxin-like domain. The Fe cation site is built by cysteine 6, cysteine 9, cysteine 39, and cysteine 42.

The protein belongs to the rubredoxin family. Fe(3+) serves as cofactor.

It is found in the cytoplasm. It functions in the pathway hydrocarbon metabolism; alkane degradation. Functionally, involved in the hydrocarbon hydroxylating system, which transfers electrons from NADH to rubredoxin reductase and then through rubredoxin to alkane 1 monooxygenase. This chain is Rubredoxin-2 (rubA2), found in Pseudomonas aeruginosa (strain ATCC 15692 / DSM 22644 / CIP 104116 / JCM 14847 / LMG 12228 / 1C / PRS 101 / PAO1).